The sequence spans 926 residues: LPS-assembly protein LptD (926 aa).

Residues 1–22 (MALKSPAFRKKFPLLVTGSLLA) form the signal peptide. The disordered stretch occupies residues 58–99 (VDLPPRPVHDTTSVSSNGTVTSQSTSSGEQVAGTQLVTEAKG). Residues 68–85 (TTSVSSNGTVTSQSTSSG) show a composition bias toward low complexity.

Belongs to the LptD family. As to quaternary structure, component of the lipopolysaccharide transport and assembly complex. Interacts with LptE and LptA.

The protein resides in the cell outer membrane. In terms of biological role, together with LptE, is involved in the assembly of lipopolysaccharide (LPS) at the surface of the outer membrane. This Pseudomonas savastanoi pv. phaseolicola (strain 1448A / Race 6) (Pseudomonas syringae pv. phaseolicola (strain 1448A / Race 6)) protein is LPS-assembly protein LptD.